The chain runs to 164 residues: SsrA-binding protein (164 aa).

Positions 141–164 (KLHDKRQDEKQKSIKREINSALKR) are disordered. Residues 145–158 (KRQDEKQKSIKREI) show a composition bias toward basic and acidic residues.

The protein belongs to the SmpB family.

The protein localises to the cytoplasm. In terms of biological role, required for rescue of stalled ribosomes mediated by trans-translation. Binds to transfer-messenger RNA (tmRNA), required for stable association of tmRNA with ribosomes. tmRNA and SmpB together mimic tRNA shape, replacing the anticodon stem-loop with SmpB. tmRNA is encoded by the ssrA gene; the 2 termini fold to resemble tRNA(Ala) and it encodes a 'tag peptide', a short internal open reading frame. During trans-translation Ala-aminoacylated tmRNA acts like a tRNA, entering the A-site of stalled ribosomes, displacing the stalled mRNA. The ribosome then switches to translate the ORF on the tmRNA; the nascent peptide is terminated with the 'tag peptide' encoded by the tmRNA and targeted for degradation. The ribosome is freed to recommence translation, which seems to be the essential function of trans-translation. This Prochlorococcus marinus (strain MIT 9215) protein is SsrA-binding protein.